The following is a 142-amino-acid chain: Large ribosomal subunit protein uL13 (142 aa).

This sequence belongs to the universal ribosomal protein uL13 family. In terms of assembly, part of the 50S ribosomal subunit.

In terms of biological role, this protein is one of the early assembly proteins of the 50S ribosomal subunit, although it is not seen to bind rRNA by itself. It is important during the early stages of 50S assembly. The sequence is that of Large ribosomal subunit protein uL13 from Pseudoalteromonas atlantica (strain T6c / ATCC BAA-1087).